A 166-amino-acid chain; its full sequence is Cofilin-2 (166 aa).

Residue A2 is modified to N-acetylalanine. S3 is modified (phosphoserine). The ADF-H domain maps to G4 to L153. Phosphothreonine is present on T6. Residues K30–K34 carry the Nuclear localization signal motif.

It belongs to the actin-binding proteins ADF family. The phosphorylation of Ser-24 may prevent recognition of the nuclear localization signal.

Its subcellular location is the nucleus matrix. It localises to the cytoplasm. The protein resides in the cytoskeleton. Controls reversibly actin polymerization and depolymerization in a pH-sensitive manner. It has the ability to bind G- and F-actin in a 1:1 ratio of cofilin to actin. It is the major component of intranuclear and cytoplasmic actin rods. The chain is Cofilin-2 (CFL2) from Bos taurus (Bovine).